Here is a 178-residue protein sequence, read N- to C-terminus: Disulfide bond formation protein B (178 aa).

At 1-16 (MTIFSSLNQFSKGHVS) the chain is on the cytoplasmic side. The helical transmembrane segment at 17–33 (WLLLLLFIIFFEACALY) threads the bilayer. At 34 to 51 (FQHVMMLAPCVMCIYERV) the chain is on the periplasmic side. A disulfide bridge links cysteine 43 with cysteine 46. A helical membrane pass occupies residues 52 to 67 (AMMGIGGAAIIGLIAP). Residues 68 to 74 (NNALFRW) are Cytoplasmic-facing. A helical transmembrane segment spans residues 75–92 (LGLIGWGLSSYKGLMLAM). Residues 93–147 (QHVDYQFNPSPFATCDLFVTFPSWAPLNQWVPWMFEAYGDCSKIVWQFFDLSMPQ) lie on the Periplasmic side of the membrane. Cysteine 107 and cysteine 133 are joined by a disulfide. A helical membrane pass occupies residues 148–166 (WLVVIFAGNLVALALIVIA). Over 167 to 178 (QFFPVKRKNPIR) the chain is Cytoplasmic.

This sequence belongs to the DsbB family.

The protein localises to the cell inner membrane. Required for disulfide bond formation in some periplasmic proteins. Acts by oxidizing the DsbA protein. The protein is Disulfide bond formation protein B of Vibrio parahaemolyticus serotype O3:K6 (strain RIMD 2210633).